Consider the following 258-residue polypeptide: Methylthioribulose-1-phosphate dehydratase (258 aa).

Residues Met-1 to Asp-21 form a disordered region. Cys-105 lines the substrate pocket. Residues His-123 and His-125 each coordinate Zn(2+). Glu-153 serves as the catalytic Proton donor/acceptor. His-210 lines the Zn(2+) pocket.

It belongs to the aldolase class II family. MtnB subfamily. Zn(2+) serves as cofactor.

The protein resides in the cytoplasm. The catalysed reaction is 5-(methylsulfanyl)-D-ribulose 1-phosphate = 5-methylsulfanyl-2,3-dioxopentyl phosphate + H2O. Its pathway is amino-acid biosynthesis; L-methionine biosynthesis via salvage pathway; L-methionine from S-methyl-5-thio-alpha-D-ribose 1-phosphate: step 2/6. Functionally, catalyzes the dehydration of methylthioribulose-1-phosphate (MTRu-1-P) into 2,3-diketo-5-methylthiopentyl-1-phosphate (DK-MTP-1-P). This Neurospora crassa (strain ATCC 24698 / 74-OR23-1A / CBS 708.71 / DSM 1257 / FGSC 987) protein is Methylthioribulose-1-phosphate dehydratase.